The sequence spans 77 residues: uncharacterized protein (77 aa).

This is an uncharacterized protein from Homo sapiens (Human).